A 596-amino-acid polypeptide reads, in one-letter code: Arrestin domain-containing protein C31A2.12 (596 aa).

The chain crosses the membrane as a helical span at residues 194-211 (AYAIGSYIPIHFVLVPLL). Disordered regions lie at residues 363–387 (NLDT…TYAS) and 405–446 (QQQP…VITR). 2 positions are modified to phosphothreonine: threonine 373 and threonine 374. Composition is skewed to polar residues over residues 405-420 (QQQP…SPSN) and 430-446 (SLGS…VITR). Phosphoserine occurs at positions 452, 474, 493, and 497. A disordered region spans residues 493–596 (SRPPSPGIVT…MLPSGFSRRN (104 aa)). Threonine 502 and threonine 507 each carry phosphothreonine. A compositionally biased stretch (polar residues) spans 504 to 522 (PQRTSPSFFVSPTESTRQS). At serine 514 the chain carries Phosphoserine. The segment covering 531–555 (HSTSSSSGISPSHSSASLAHLSQAS) has biased composition (low complexity).

It belongs to the arrestin family.

The protein localises to the membrane. This Schizosaccharomyces pombe (strain 972 / ATCC 24843) (Fission yeast) protein is Arrestin domain-containing protein C31A2.12.